A 723-amino-acid chain; its full sequence is DNA-binding protein RFX2 (723 aa).

The disordered stretch occupies residues 1-46; sequence MQNSEGGADSPASVALRPSAAAPPVPASPQRVLVQAASSNPKGAQM. Residues 10–20 show a composition bias toward low complexity; the sequence is SPASVALRPSA. At Ser-28 the chain carries Phosphoserine. The RFX-type winged-helix DNA-binding region spans 199-274; sequence HLQWLLDNYE…YHYYGIRLKP (76 aa). The interval 292 to 332 is disordered; it reads QQPMHQKPRYRPAQKTDSLGDSGSHSGLHSTPEQTMAVQSQ. Positions 308–321 are enriched in low complexity; sequence DSLGDSGSHSGLHS. Polar residues predominate over residues 322-332; it reads TPEQTMAVQSQ. Ser-416 is subject to Phosphoserine. The tract at residues 688–723 is disordered; the sequence is MGDEQRGSEAGPDARSLGEPLVKRERSDPNHSLQGI.

The protein belongs to the RFX family. As to quaternary structure, homodimer; probably only forms homodimers in testis. Heterodimer; heterodimerizes with RFX1 and RFX3.

Its subcellular location is the nucleus. It is found in the cytoplasm. Its function is as follows. Transcription factor that acts as a key regulator of spermatogenesis. Acts by regulating expression of genes required for the haploid phase during spermiogenesis, such as genes required for cilium assembly and function. Recognizes and binds the X-box, a regulatory motif with DNA sequence 5'-GTNRCC(0-3N)RGYAAC-3' present on promoters. Probably activates transcription of the testis-specific histone gene H1-6. The sequence is that of DNA-binding protein RFX2 (RFX2) from Homo sapiens (Human).